Reading from the N-terminus, the 28-residue chain is Dolichyl-diphosphooligosaccharide--protein glycosyltransferase subunit 1 (28 aa).

Belongs to the OST1 family. In terms of assembly, component of the oligosaccharyltransferase (OST) complex.

It is found in the endoplasmic reticulum membrane. It functions in the pathway protein modification; protein glycosylation. Subunit of the oligosaccharyl transferase (OST) complex that catalyzes the initial transfer of a defined glycan (Glc(3)Man(9)GlcNAc(2) in eukaryotes) from the lipid carrier dolichol-pyrophosphate to an asparagine residue within an Asn-X-Ser/Thr consensus motif in nascent polypeptide chains, the first step in protein N-glycosylation. N-glycosylation occurs cotranslationally and the complex associates with the Sec61 complex at the channel-forming translocon complex that mediates protein translocation across the endoplasmic reticulum (ER). All subunits are required for a maximal enzyme activity. This Gallus gallus (Chicken) protein is Dolichyl-diphosphooligosaccharide--protein glycosyltransferase subunit 1.